A 364-amino-acid chain; its full sequence is MPRPILATIHRPALAHNLARARSAAPDARVWAVVKANAYGHGIEHVFDGLRSADGFALLDLAEARRLRALDWRGPILLLEGCFEARDLELCSRLSLWHVIHCNEQIDMLAAHKTQVPHRVFLKMNSGMNRLGLRPERFRAAWTRLNALPQVDEISLMTHFSDADGPKGIAAQLRAFDAVTHDLPGERSLSNSAGVLRHGDELAARSDWVRPGIVVYGSAPDFPEHSAADWGLQPTMTLSSRIIGVQELAAGDTVGYGSSFTADGPLRIGVVACGYADGYPRHCSTGTPVLVNGVRTRMVGRVSMDMITVDLTPVPDAGMGAEVTLWGRSSGGAVLPIDEVAQTAGTVGYELMCAVAPRVPVMTE.

Catalysis depends on Lys-35, which acts as the Proton acceptor; specific for D-alanine. Lys-35 is modified (N6-(pyridoxal phosphate)lysine). Arg-130 lines the substrate pocket. The active-site Proton acceptor; specific for L-alanine is the Tyr-256. Position 304 (Met-304) interacts with substrate.

This sequence belongs to the alanine racemase family. Pyridoxal 5'-phosphate serves as cofactor.

It catalyses the reaction L-alanine = D-alanine. It participates in amino-acid biosynthesis; D-alanine biosynthesis; D-alanine from L-alanine: step 1/1. Functionally, catalyzes the interconversion of L-alanine and D-alanine. May also act on other amino acids. The protein is Alanine racemase (alr) of Polaromonas sp. (strain JS666 / ATCC BAA-500).